Reading from the N-terminus, the 198-residue chain is uncharacterized protein (198 aa).

Residues 1-110 form the PA14 domain; the sequence is MTGYFLPPQT…GTTVSDDFEG (110 aa).

Belongs to the flocculin family.

This is an uncharacterized protein from Saccharomyces cerevisiae (strain ATCC 204508 / S288c) (Baker's yeast).